The sequence spans 949 residues: Translation initiation factor IF-2 (949 aa).

Disordered stretches follow at residues 50-206 and 220-359; these read FTEK…GAAR and QNAE…TERK. Composition is skewed to basic and acidic residues over residues 52 to 84 and 104 to 143; these read EKPK…KVEK and FKAE…DQGS. 2 stretches are compositionally biased toward polar residues: residues 144 to 154 and 164 to 180; these read KNRNFNKSQGQ and GSQQ…SNKP. The segment covering 187-206 has biased composition (low complexity); the sequence is NAANRNQNNSQQERQVGAAR. The span at 224-275 shows a compositional bias: basic and acidic residues; sequence YMRHKETQLREQEEARRLAERAKEEARLAAQKAAEEKAKEAEKAAKTERFEP. Over residues 319 to 336 the composition is skewed to low complexity; it reads KSWNNQNQVRNQRNSNWN. A tr-type G domain is found at 450–619; it reads ERAPVVTIMG…LLVAEVEELK (170 aa). The segment at 459-466 is G1; the sequence is GHVDHGKT. 459 to 466 is a GTP binding site; it reads GHVDHGKT. The interval 484–488 is G2; that stretch reads GITQH. Positions 505–508 are G3; that stretch reads DTPG. GTP is bound by residues 505-509 and 559-562; these read DTPGH and NKID. The interval 559-562 is G4; the sequence is NKID. Residues 595 to 597 form a G5 region; that stretch reads SAK.

Belongs to the TRAFAC class translation factor GTPase superfamily. Classic translation factor GTPase family. IF-2 subfamily.

It is found in the cytoplasm. In terms of biological role, one of the essential components for the initiation of protein synthesis. Protects formylmethionyl-tRNA from spontaneous hydrolysis and promotes its binding to the 30S ribosomal subunits. Also involved in the hydrolysis of GTP during the formation of the 70S ribosomal complex. This chain is Translation initiation factor IF-2, found in Streptococcus uberis (strain ATCC BAA-854 / 0140J).